Here is an 88-residue protein sequence, read N- to C-terminus: Apolipoprotein C-I (88 aa).

The N-terminal stretch at 1-26 (MRLILSLPVLAVVLAMVLEGPAPAQA) is a signal peptide.

Belongs to the apolipoprotein C1 family.

The protein resides in the secreted. Inhibitor of lipoprotein binding to the low density lipoprotein (LDL) receptor, LDL receptor-related protein, and very low density lipoprotein (VLDL) receptor. Associates with high density lipoproteins (HDL) and the triacylglycerol-rich lipoproteins in the plasma and makes up about 10% of the protein of the VLDL and 2% of that of HDL. Appears to interfere directly with fatty acid uptake and is also the major plasma inhibitor of cholesteryl ester transfer protein (CETP). Binds free fatty acids and reduces their intracellular esterification. Modulates the interaction of APOE with beta-migrating VLDL and inhibits binding of beta-VLDL to the LDL receptor-related protein. In Cynopterus brachyotis (Lesser short-nosed fruit bat), this protein is Apolipoprotein C-I (APOC1).